The chain runs to 354 residues: Phospho-N-acetylmuramoyl-pentapeptide-transferase (354 aa).

Helical transmembrane passes span 27–47 (ATLL…INML), 73–93 (TMGG…WMDV), 97–117 (LVWA…LDDY), 138–158 (FVVA…YVPV), 162–182 (LYVP…VGAG), 193–213 (GLAI…AYLA), 230–250 (AGEL…FLWF), 256–276 (AVFM…VIAV), 282–302 (IVLA…IVQV), and 331–351 (TVVI…LATL).

This sequence belongs to the glycosyltransferase 4 family. MraY subfamily. Mg(2+) is required as a cofactor.

It localises to the cell inner membrane. It catalyses the reaction UDP-N-acetyl-alpha-D-muramoyl-L-alanyl-gamma-D-glutamyl-meso-2,6-diaminopimeloyl-D-alanyl-D-alanine + di-trans,octa-cis-undecaprenyl phosphate = di-trans,octa-cis-undecaprenyl diphospho-N-acetyl-alpha-D-muramoyl-L-alanyl-D-glutamyl-meso-2,6-diaminopimeloyl-D-alanyl-D-alanine + UMP. It functions in the pathway cell wall biogenesis; peptidoglycan biosynthesis. Catalyzes the initial step of the lipid cycle reactions in the biosynthesis of the cell wall peptidoglycan: transfers peptidoglycan precursor phospho-MurNAc-pentapeptide from UDP-MurNAc-pentapeptide onto the lipid carrier undecaprenyl phosphate, yielding undecaprenyl-pyrophosphoryl-MurNAc-pentapeptide, known as lipid I. In Novosphingobium aromaticivorans (strain ATCC 700278 / DSM 12444 / CCUG 56034 / CIP 105152 / NBRC 16084 / F199), this protein is Phospho-N-acetylmuramoyl-pentapeptide-transferase.